A 196-amino-acid polypeptide reads, in one-letter code: Peptidyl-tRNA hydrolase (196 aa).

Position 18 (Tyr18) interacts with tRNA. His23 functions as the Proton acceptor in the catalytic mechanism. Phe69, Asn71, and Asn117 together coordinate tRNA.

This sequence belongs to the PTH family. As to quaternary structure, monomer.

The protein resides in the cytoplasm. The catalysed reaction is an N-acyl-L-alpha-aminoacyl-tRNA + H2O = an N-acyl-L-amino acid + a tRNA + H(+). Its function is as follows. Hydrolyzes ribosome-free peptidyl-tRNAs (with 1 or more amino acids incorporated), which drop off the ribosome during protein synthesis, or as a result of ribosome stalling. Functionally, catalyzes the release of premature peptidyl moieties from peptidyl-tRNA molecules trapped in stalled 50S ribosomal subunits, and thus maintains levels of free tRNAs and 50S ribosomes. This Vibrio cholerae serotype O1 (strain ATCC 39315 / El Tor Inaba N16961) protein is Peptidyl-tRNA hydrolase.